We begin with the raw amino-acid sequence, 240 residues long: Uridylate kinase (240 aa).

12–15 (KLSG) contributes to the ATP binding site. The tract at residues 20–25 (GDQGKG) is involved in allosteric activation by GTP. Residue Gly54 participates in UMP binding. Residues Gly55 and Arg59 each contribute to the ATP site. Residues Asp74 and 135–142 (TGSPYFST) each bind UMP. The ATP site is built by Asn163, Tyr169, and Asp172.

The protein belongs to the UMP kinase family. As to quaternary structure, homohexamer.

It is found in the cytoplasm. The catalysed reaction is UMP + ATP = UDP + ADP. The protein operates within pyrimidine metabolism; CTP biosynthesis via de novo pathway; UDP from UMP (UMPK route): step 1/1. Its activity is regulated as follows. Allosterically activated by GTP. Inhibited by UTP. In terms of biological role, catalyzes the reversible phosphorylation of UMP to UDP. The chain is Uridylate kinase from Ligilactobacillus salivarius (strain UCC118) (Lactobacillus salivarius).